The following is a 358-amino-acid chain: Protein RecA (358 aa).

76–83 contributes to the ATP binding site; sequence GPESSGKT.

Belongs to the RecA family.

Its subcellular location is the cytoplasm. Its function is as follows. Can catalyze the hydrolysis of ATP in the presence of single-stranded DNA, the ATP-dependent uptake of single-stranded DNA by duplex DNA, and the ATP-dependent hybridization of homologous single-stranded DNAs. It interacts with LexA causing its activation and leading to its autocatalytic cleavage. The protein is Protein RecA of Rhodospirillum centenum (strain ATCC 51521 / SW).